The following is a 164-amino-acid chain: Putative Cys-tRNA(Pro)/Cys-tRNA(Cys) deacylase EbsC (164 aa).

The protein belongs to the prolyl-tRNA editing family. YbaK/EbsC subfamily.

Affects the expression of the receptor, named binding substance, that mediates mating aggregate formation. Could be a regulatory protein that suppresses the function or expression of ebsA and/or ebsMB. The polypeptide is Putative Cys-tRNA(Pro)/Cys-tRNA(Cys) deacylase EbsC (Enterococcus faecalis (strain ATCC 700802 / V583)).